The primary structure comprises 558 residues: Magnesium-chelatase 60 kDa subunit (558 aa).

Disordered stretches follow at residues 234 to 268 (MPASEEAPPEPEPEPPEDQPDDSPPPPEQQQGEEM) and 298 to 325 (MARGATGTGSAKAGNRRGRPLPSRMGRL). Positions 240–254 (APPEPEPEPPEDQPD) are enriched in acidic residues. The segment covering 298 to 308 (MARGATGTGSA) has biased composition (low complexity). One can recognise a VWFA domain in the interval 376-555 (VLIFAVDASG…HKLSNVLGAA (180 aa)).

It belongs to the Mg-chelatase subunits D/I family.

It catalyses the reaction protoporphyrin IX + Mg(2+) + ATP + H2O = Mg-protoporphyrin IX + ADP + phosphate + 3 H(+). Its pathway is porphyrin-containing compound metabolism; bacteriochlorophyll biosynthesis. In terms of biological role, involved in bacteriochlorophyll biosynthesis; introduces a magnesium ion into protoporphyrin IX to yield Mg-protoporphyrin IX. The chain is Magnesium-chelatase 60 kDa subunit (bchD) from Cereibacter sphaeroides (strain ATCC 17023 / DSM 158 / JCM 6121 / CCUG 31486 / LMG 2827 / NBRC 12203 / NCIMB 8253 / ATH 2.4.1.) (Rhodobacter sphaeroides).